Here is a 73-residue protein sequence, read N- to C-terminus: UPF0154 protein BCG9842_B1526 (73 aa).

A helical transmembrane segment spans residues 3–23 (IWLGILVGVVALVAGVALGFF).

This sequence belongs to the UPF0154 family.

It localises to the cell membrane. The chain is UPF0154 protein BCG9842_B1526 from Bacillus cereus (strain G9842).